We begin with the raw amino-acid sequence, 78 residues long: Neurogranin (78 aa).

The residue at position 1 (methionine 1) is an N-acetylmethionine. A disulfide bridge connects residues cysteine 3 and cysteine 51. The region spanning 26–47 (ANAAAAKIQASFRGHMARKKIK) is the IQ domain. Serine 36 is modified (phosphoserine; by PHK and PKC). The disordered stretch occupies residues 39–78 (GHMARKKIKSGECGRKGPGPGGPGGAGGARGGAGGGPSGD). A Collagen-like domain is found at 48–78 (SGECGRKGPGPGGPGGAGGARGGAGGGPSGD). The segment covering 54–78 (KGPGPGGPGGAGGARGGAGGGPSGD) has biased composition (gly residues). Arginine 68 is modified (citrulline; partial). Position 68 is an omega-N-methylarginine (arginine 68).

The protein belongs to the neurogranin family. Interacts with apo-calmodulin; this interaction decreases the affinity of calmodulin for calcium ions. Post-translationally, disulfide bond formation is redox-sensitive. The cysteine residues are readily oxidized by several nitric acid (NO) donors and other oxidants to form intramolecular disulfide. Cys-51 can form a disulfide with any other of the cysteine residues with an order of reactivity Cys-9 &gt; Cys-4 &gt; Cys-3. Phosphorylated at Ser-36 by PHK and PKC, phosphorylation prevents interaction with Calmodulin and interrupts several learning- and memory-associated functions.

The protein resides in the cytoplasm. Its subcellular location is the synapse. It localises to the cell projection. It is found in the dendritic spine. Functionally, regulates the affinity of calmodulin for calcium. Involved in synaptic plasticity and spatial learning. In Mus musculus (Mouse), this protein is Neurogranin (Nrgn).